Consider the following 426-residue polypeptide: MEPSSWSGSESPAENMERMSDSADKPIDNDAEGVWSPDIEQSFQEALAIYPPCGRRKIILSDEGKMYGRNELIARYIKLRTGKTRTRKQVSSHIQVLARRKSRDFHSKLKDQTAKDKALQHMAAMSSAQIVSATAIHNKLGLPGIPRPTFPGGPGFWPGMIQTGQPGSSQDVKPFVQQAYPIQPAVTAPIPGFEPTSAPAPSVPAWQGRSIGTTKLRLVEFSAFLEQQRDPDSYNKHLFVHIGHANHSYSDPLLESVDIRQIYDKFPEKKGGLKELFGKGPQNAFFLVKFWADLNCNIQDDAGAFYGVSSQYESSENMTVTCSTKVCSFGKQVVEKVETEYARFENGRFVYRINRSPMCEYMINFIHKLKHLPEKYMMNSVLENFTILLVVTNRDTQETLLCMACVFEVSNSEHGAQHHIYRLVKD.

Position 1 is an N-acetylmethionine (methionine 1). The segment covering 1 to 12 has biased composition (polar residues); it reads MEPSSWSGSESP. A disordered region spans residues 1 to 31; it reads MEPSSWSGSESPAENMERMSDSADKPIDNDA. Serine 11 is subject to Phosphoserine. The span at 15 to 28 shows a compositional bias: basic and acidic residues; sequence NMERMSDSADKPID. The TEA DNA-binding region spans 28 to 104; that stretch reads DNDAEGVWSP…QVLARRKSRD (77 aa). Lysine 108 is modified (N6-lactoyllysine). Residues 167-426 are transcriptional activation; that stretch reads GSSQDVKPFV…QHHIYRLVKD (260 aa).

As to quaternary structure, interacts with YAP1 and WWTR1/TAZ. Lactylation by AARS1 promotes nuclear localization and stabilization of YAP1, leading to increased Hippo signaling pathway. Delactylated by SIRT1. As to expression, in developing skeletal muscle and myocardium, in mitotic neuroblasts both in the brain and spinal cord. At later stages of embryogenesis expressed in several developing structures such as the olfactory system, the intestine, and the kidney.

It localises to the nucleus. Transcription factor which plays a key role in the Hippo signaling pathway, a pathway involved in organ size control and tumor suppression by restricting proliferation and promoting apoptosis. The core of this pathway is composed of a kinase cascade wherein MST1/MST2, in complex with its regulatory protein SAV1, phosphorylates and activates LATS1/2 in complex with its regulatory protein MOB1, which in turn phosphorylates and inactivates YAP1 oncoprotein and WWTR1/TAZ. Acts by mediating gene expression of YAP1 and WWTR1/TAZ, thereby regulating cell proliferation, migration and epithelial mesenchymal transition (EMT) induction. Binds specifically and cooperatively to the SPH and GT-IIC 'enhansons' (5'-GTGGAATGT-3') and activates transcription in vivo in a cell-specific manner. The activation function appears to be mediated by a limiting cell-specific transcriptional intermediary factor (TIF). Involved in cardiac development. Binds to the M-CAT motif. The sequence is that of Transcriptional enhancer factor TEF-1 (Tead1) from Mus musculus (Mouse).